The sequence spans 96 residues: MF6 protein (96 aa).

In Myxoma virus (strain Uriarra) (MYXV), this protein is MF6 protein.